The sequence spans 544 residues: MGNSCRGSFKDKIYEGNHSRPEENSKSTTTTVSSVHSPTTDQDFSKQNTNPALVIPVKEPIMRRNVDNQSYYVLGHKTPNIRDLYTLSRKLGQGQFGTTYLCTDIATGVDYACKSISKRKLISKEDVEDVRREIQIMHHLAGHKNIVTIKGAYEDPLYVHIVMELCAGGELFDRIIHRGHYSERKAAELTKIIVGVVEACHSLGVMHRDLKPENFLLVNKDDDFSLKAIDFGLSVFFKPGQIFKDVVGSPYYVAPEVLLKHYGPEADVWTAGVILYILLSGVPPFWAETQQGIFDAVLKGYIDFDTDPWPVISDSAKDLIRKMLCSSPSERLTAHEVLRHPWICENGVAPDRALDPAVLSRLKQFSAMNKLKKMALKVIAESLSEEEIAGLRAMFEAMDTDNSGAITFDELKAGLRRYGSTLKDTEIRDLMEAADVDNSGTIDYSEFIAATIHLNKLEREEHLVSAFQYFDKDGSGYITIDELQQSCIEHGMTDVFLEDIIKEVDQDNDGRIDYEEFVAMMQKGNAGVGRRTMKNSLNISMRDV.

Positions 1–47 (MGNSCRGSFKDKIYEGNHSRPEENSKSTTTTVSSVHSPTTDQDFSKQ) are disordered. G2 carries N-myristoyl glycine lipidation. The segment covering 8–25 (SFKDKIYEGNHSRPEENS) has biased composition (basic and acidic residues). The span at 26-40 (KSTTTTVSSVHSPTT) shows a compositional bias: low complexity. Residues 85-343 (YTLSRKLGQG…AHEVLRHPWI (259 aa)) enclose the Protein kinase domain. ATP-binding positions include 91 to 99 (LGQGQFGTT) and K114. D209 serves as the catalytic Proton acceptor. Position 249 is a phosphoserine (S249). Residues 349 to 379 (APDRALDPAVLSRLKQFSAMNKLKKMALKVI) form an autoinhibitory domain region. EF-hand domains follow at residues 386–421 (EEIA…YGST), 422–457 (LKDT…LNKL), 458–493 (EREE…HGMT), and 497–527 (LEDI…GNAG). The Ca(2+) site is built by D399, D401, S403, E410, D435, D437, S439, T441, E446, D471, D473, S475, Y477, E482, D505, D507, D509, R511, and E516.

It belongs to the protein kinase superfamily. Ser/Thr protein kinase family. CDPK subfamily. As to quaternary structure, interacts with SLAC1. Interacts with FD. Expressed in both guard cells and mesophyll cells. Expressed in the shoot apical meristem.

It is found in the cell membrane. The protein localises to the nucleus. The enzyme catalyses L-seryl-[protein] + ATP = O-phospho-L-seryl-[protein] + ADP + H(+). It catalyses the reaction L-threonyl-[protein] + ATP = O-phospho-L-threonyl-[protein] + ADP + H(+). Activated by calcium. Autophosphorylation may play an important role in the regulation of the kinase activity. May play a role in signal transduction pathways that involve calcium as a second messenger. Functions in abscisic acid (ABA) regulation of guard cell S-type anion- and Ca(2+)-permeable channels and stomatal closure. Phosphorylates FD. This Arabidopsis thaliana (Mouse-ear cress) protein is Calcium-dependent protein kinase 6 (CPK6).